The sequence spans 100 residues: Urease subunit gamma 2 (100 aa).

This sequence belongs to the urease gamma subunit family. Heterotrimer of UreA (gamma), UreB (beta) and UreC (alpha) subunits. Three heterotrimers associate to form the active enzyme.

The protein localises to the cytoplasm. The enzyme catalyses urea + 2 H2O + H(+) = hydrogencarbonate + 2 NH4(+). The protein operates within nitrogen metabolism; urea degradation; CO(2) and NH(3) from urea (urease route): step 1/1. The polypeptide is Urease subunit gamma 2 (Psychrobacter cryohalolentis (strain ATCC BAA-1226 / DSM 17306 / VKM B-2378 / K5)).